We begin with the raw amino-acid sequence, 1178 residues long: Double-stranded RNA-specific adenosine deaminase (1178 aa).

A disordered region spans residues 1–40; that stretch reads MSQGFRGPTGVFPHQTQSYLDPSHEHSKWRYPQPQGPESY. R30 and R42 each carry asymmetric dimethylarginine. The region spanning 135–201 is the Z-binding 1 domain; it reads LSISQSPEQK…GKPPLWSLVP (67 aa). Positions 135 to 204 are interaction with Z-DNA; sequence LSISQSPEQK…PLWSLVPLSQ (70 aa). Residues 221–244 are disordered; sequence EFPRGEPGLDSEDGDPASDLEGPS. Residues 229–238 show a composition bias toward acidic residues; the sequence is LDSEDGDPAS. S231 and S238 each carry phosphoserine. The Z-binding 2 domain occupies 246 to 310; it reads PLDMAEIKEK…ATPPIWYLTD (65 aa). Positions 316-383 are disordered; that stretch reads LQMKRSTHSA…SRHEARPGPM (68 aa). Low complexity predominate over residues 323-337; the sequence is HSAPAPTPTAVPEAT. The span at 360 to 379 shows a compositional bias: basic and acidic residues; that stretch reads KRVENGQEPAIKHESRHEAR. K371 participates in a covalent cross-link: Glycyl lysine isopeptide (Lys-Gly) (interchain with G-Cter in SUMO); alternate. K371 participates in a covalent cross-link: Glycyl lysine isopeptide (Lys-Gly) (interchain with G-Cter in SUMO1); alternate. A Glycyl lysine isopeptide (Lys-Gly) (interchain with G-Cter in SUMO2); alternate cross-link involves residue K371. S434 bears the Phosphoserine mark. Residues 456 to 524 form the DRBM 1 domain; it reads NPVSGLLEYA…AVKAMAILLR (69 aa). The segment covering 527 to 550 has biased composition (basic and acidic residues); sequence KAKDSGQPEDLSHCPMEEDSEKPA. The interval 527 to 564 is disordered; the sequence is KAKDSGQPEDLSHCPMEEDSEKPAEAQAPSSSATSLFS. A compositionally biased stretch (polar residues) spans 554 to 564; that stretch reads APSSSATSLFS. S567, S582, and S589 each carry phosphoserine. The 69-residue stretch at 567–635 folds into the DRBM 2 domain; that stretch reads SPVTTLLECM…AEEAMKALQE (69 aa). Residues 631–657 form a disordered region; that stretch reads KALQEEAASSADDQSGGANTDSLDESM. Positions 635-648 are enriched in low complexity; sequence EEAASSADDQSGGA. An N-terminal extension of DRBM 3 and constituent of a bi-partite nuclear localization signal region spans residues 665–674; sequence IGELVRYLNT. The DRBM 3 domain maps to 675–743; that stretch reads NPVGGLLEYA…ADAALRVLIG (69 aa). The C-terminal extension of DRBM 3 and constituent of a bi-partite nuclear localization signal stretch occupies residues 744 to 750; sequence ESEKAEQ. Residue T757 is modified to Phosphothreonine. A phosphoserine mark is found at S763, S772, and S774. K824 participates in a covalent cross-link: Glycyl lysine isopeptide (Lys-Gly) (interchain with G-Cter in SUMO2). The 336-residue stretch at 835–1170 folds into the A to I editase domain; that stretch reads SLGTGNRCVK…ISKPQEEKNF (336 aa). A Zn(2+)-binding site is contributed by H859. The active-site Proton donor is E861. Residues C915 and C985 each coordinate Zn(2+).

As to quaternary structure, homodimer. Homodimerization is essential for its catalytic activity. Isoform 5 can form heterodimers with ADARB1/ADAR2. Isoform 1 and isoform 5 (via DRBM 3 domain) interact with TNPO1. Isoform 5 (via DRBM domains) interacts with XPO5. Isoform 1 and isoform 5 can interact with UPF1. Isoform 1 interacts with ILF2/NF45 and ILF3/NF90. Binding to ILF3/NF90 up-regulates ILF3-mediated gene expression. Isoform 1 and isoform 5 interact with EIF2AK2/PKR. Post-translationally, sumoylation reduces RNA-editing activity. As to expression, highest levels in brain and spleen. Lowest levels in liver.

The protein localises to the cytoplasm. It is found in the nucleus. Its subcellular location is the nucleolus. The catalysed reaction is adenosine in double-stranded RNA + H2O + H(+) = inosine in double-stranded RNA + NH4(+). Its function is as follows. Catalyzes the hydrolytic deamination of adenosine to inosine in double-stranded RNA (dsRNA) referred to as A-to-I RNA editing. This may affect gene expression and function in a number of ways that include mRNA translation by changing codons and hence the amino acid sequence of proteins since the translational machinery read the inosine as a guanosine; pre-mRNA splicing by altering splice site recognition sequences; RNA stability by changing sequences involved in nuclease recognition; genetic stability in the case of RNA virus genomes by changing sequences during viral RNA replication; and RNA structure-dependent activities such as microRNA production or targeting or protein-RNA interactions. Can edit both viral and cellular RNAs and can edit RNAs at multiple sites (hyper-editing) or at specific sites (site-specific editing). Its cellular RNA substrates include: bladder cancer-associated protein (BLCAP), neurotransmitter receptors for glutamate (GRIA2) and serotonin (HTR2C) and GABA receptor (GABRA3). Site-specific RNA editing of transcripts encoding these proteins results in amino acid substitutions which consequently alters their functional activities. Exhibits low-level editing at the GRIA2 Q/R site, but edits efficiently at the R/G site and HOTSPOT1. Does not affect polyomavirus replication but provides protection against virus-induced cytopathic effects. Essential for embryonic development and cell survival and plays a critical role in the maintenance of hematopoietic stem cells. This chain is Double-stranded RNA-specific adenosine deaminase (Adar), found in Mus musculus (Mouse).